The following is a 369-amino-acid chain: S-adenosyl-L-methionine-dependent uroporphyrinogen III methyltransferase, chloroplastic (369 aa).

The transit peptide at 1 to 28 (MALVQRIPISSSSIRNWQQARTNLTPIC) directs the protein to the chloroplast. S-adenosyl-L-homocysteine-binding positions include Pro124, 200-202 (GGD), 230-231 (TA), Met284, and Thr341.

It belongs to the precorrin methyltransferase family. As to expression, mostly expressed in leaves, and, to a lower extent, in stems, flowers and siliques.

The protein resides in the plastid. The protein localises to the chloroplast. The enzyme catalyses uroporphyrinogen III + 2 S-adenosyl-L-methionine = precorrin-2 + 2 S-adenosyl-L-homocysteine + H(+). The protein operates within porphyrin-containing compound metabolism; siroheme biosynthesis; precorrin-2 from uroporphyrinogen III: step 1/1. Essential protein required for siroheme biosynthesis. Catalyzes the two successive C-2 and C-7 methylation reactions involved in the conversion of uroporphyrinogen III to precorrin-2 via the intermediate formation of precorrin-1. It is a step in the biosynthesis of siroheme. Promotes nitrogen and sulfur assimilation as well as photosynthesis efficiency by triggering chlorophyll, nitrite reductase (NiR) and sulfite reductase (SiR) biosynthesis. The protein is S-adenosyl-L-methionine-dependent uroporphyrinogen III methyltransferase, chloroplastic of Arabidopsis thaliana (Mouse-ear cress).